The chain runs to 469 residues: MLSILLSLLSLSGTHAAPISKDNGTVCYALNSSTTDESIFPLLNGQGPHYDYPQSFGIPVEVPDQCTVEHVQMLARHGERYPTASKGKLMIALWDKLKEFQGQYNGPMEVFNDYEFFVSNTKYFDQLTNSTDVDPSNPYAGAKTAQHLGKYIAYNYGDLFSDSNPVFTSSSGRVHQTAKYVVSSLEEELDIQLDLQIIQENETSGANSLTPADSCMTYNGDLGDEYFENATLPYLTDIKNRWMKKNSNLNLTLEHDDIELLVDWCAFETNVKGSSAVCDLFERNDLVAYSYYANVNNFYRRGAGNPMSNPIGSVLVNASYNLLTQADELDNKVWLSFSHDTDIQQFISALGLIDNGVTEYSLDQVDFQNIQQLSWVTPMGGRIFTEKLKCGNASYVRYIINDVIIPVPGCTSGPGFSCPIEDFDDYITNRLNGIDYVSSCEVQQVSNTTELTFYWDYNEVEYNGPVSNK.

The signal sequence occupies residues 1–16; that stretch reads MLSILLSLLSLSGTHA. Residues N23 and N31 are each glycosylated (N-linked (GlcNAc...) asparagine). H77 (nucleophile) is an active-site residue. N-linked (GlcNAc...) asparagine glycosylation is found at N129, N201, N229, N250, and N317. Residue D340 is the Proton donor of the active site. N-linked (GlcNAc...) asparagine glycans are attached at residues N392 and N447.

Belongs to the histidine acid phosphatase family. Glycosylated during secretion across the membrane.

The protein localises to the secreted. The catalysed reaction is a phosphate monoester + H2O = an alcohol + phosphate. This Kluyveromyces lactis (strain ATCC 8585 / CBS 2359 / DSM 70799 / NBRC 1267 / NRRL Y-1140 / WM37) (Yeast) protein is Repressible acid phosphatase (PHO5).